We begin with the raw amino-acid sequence, 155 residues long: Microsomal glutathione S-transferase 1 (155 aa).

At 3–9 (DLTQVMD) the chain is on the lumenal side. A helical transmembrane segment spans residues 10–33 (DEVFMAFASYATIILSKMMLMSTA). At 34-62 (TAFYRLTRKVFANPEDCVAFGKGENAKKY) the chain is on the cytoplasmic side. R38 serves as a coordination point for glutathione. N6-acetyllysine occurs at positions 42, 55, and 60. Residues 63–96 (LRTDDRVERVRRAHLNDLENIIPFLGIGLLYSLS) form a helical membrane-spanning segment. Glutathione is bound by residues R73, R74, H76, and E81. The Lumenal segment spans residues 97-99 (GPD). A helical transmembrane segment spans residues 100–123 (PSTAILHFRLFVGARIYHTIAYLT). Y121 contributes to the glutathione binding site. Over 124 to 128 (PLPQP) the chain is Cytoplasmic. The chain crosses the membrane as a helical span at residues 129–148 (NRALSFFVGYGVTLSMAYRL). Residues 149–155 (LKSKLYL) are Lumenal-facing.

Belongs to the MAPEG family. As to quaternary structure, homotrimer; The trimer binds only one molecule of glutathione. As to expression, highly expressed in liver.

The protein localises to the endoplasmic reticulum membrane. The protein resides in the mitochondrion outer membrane. The enzyme catalyses RX + glutathione = an S-substituted glutathione + a halide anion + H(+). Functionally, conjugation of reduced glutathione to a wide number of exogenous and endogenous hydrophobic electrophiles. This Homo sapiens (Human) protein is Microsomal glutathione S-transferase 1 (MGST1).